The chain runs to 677 residues: Methionine--tRNA ligase (677 aa).

Positions 15-25 (PYANGSIHLGH) match the 'HIGH' region motif. Positions 146, 149, 159, and 162 each coordinate Zn(2+). Residues 333 to 337 (KMSKS) carry the 'KMSKS' region motif. Lysine 336 provides a ligand contact to ATP. A tRNA-binding domain is found at 575-677 (DFAKIDLRVA…DGAKPGQQVK (103 aa)).

This sequence belongs to the class-I aminoacyl-tRNA synthetase family. MetG type 1 subfamily. In terms of assembly, homodimer. It depends on Zn(2+) as a cofactor.

Its subcellular location is the cytoplasm. It catalyses the reaction tRNA(Met) + L-methionine + ATP = L-methionyl-tRNA(Met) + AMP + diphosphate. Functionally, is required not only for elongation of protein synthesis but also for the initiation of all mRNA translation through initiator tRNA(fMet) aminoacylation. The protein is Methionine--tRNA ligase of Salmonella paratyphi C (strain RKS4594).